The chain runs to 307 residues: HPr kinase/phosphorylase (307 aa).

Residues His136 and Lys157 contribute to the active site. Gly151–Ser158 is a binding site for ATP. Residue Ser158 coordinates Mg(2+). Asp175 serves as the catalytic Proton acceptor; for phosphorylation activity. Proton donor; for dephosphorylation activity. Residues Leu198 to Asp207 are important for the catalytic mechanism of both phosphorylation and dephosphorylation. Residue Glu199 coordinates Mg(2+). Arg240 is an active-site residue. An important for the catalytic mechanism of dephosphorylation region spans residues Pro261–Arg266.

The protein belongs to the HPrK/P family. In terms of assembly, homohexamer. Requires Mg(2+) as cofactor.

The enzyme catalyses [HPr protein]-L-serine + ATP = [HPr protein]-O-phospho-L-serine + ADP + H(+). It carries out the reaction [HPr protein]-O-phospho-L-serine + phosphate + H(+) = [HPr protein]-L-serine + diphosphate. Catalyzes the ATP- as well as the pyrophosphate-dependent phosphorylation of a specific serine residue in HPr, a phosphocarrier protein of the phosphoenolpyruvate-dependent sugar phosphotransferase system (PTS). HprK/P also catalyzes the pyrophosphate-producing, inorganic phosphate-dependent dephosphorylation (phosphorolysis) of seryl-phosphorylated HPr (P-Ser-HPr). The two antagonistic activities of HprK/P are regulated by several intracellular metabolites, which change their concentration in response to the absence or presence of rapidly metabolisable carbon sources (glucose, fructose, etc.) in the growth medium. Therefore, by controlling the phosphorylation state of HPr, HPrK/P is a sensor enzyme that plays a major role in the regulation of carbon metabolism and sugar transport: it mediates carbon catabolite repression (CCR), and regulates PTS-catalyzed carbohydrate uptake and inducer exclusion. This chain is HPr kinase/phosphorylase, found in Clostridium perfringens (strain 13 / Type A).